We begin with the raw amino-acid sequence, 449 residues long: Trigger factor (449 aa).

A PPIase FKBP-type domain is found at 160-231; that stretch reads TDQVTIEELG…VQSVQTKQLQ (72 aa). Positions 411 to 449 are disordered; that stretch reads GQQVAGRQEAGAEQTAQAAEQESGQPQAEGEQAAEQRGE. The segment covering 415 to 443 has biased composition (low complexity); that stretch reads AGRQEAGAEQTAQAAEQESGQPQAEGEQA.

Belongs to the FKBP-type PPIase family. Tig subfamily.

It localises to the cytoplasm. The catalysed reaction is [protein]-peptidylproline (omega=180) = [protein]-peptidylproline (omega=0). Involved in protein export. Acts as a chaperone by maintaining the newly synthesized protein in an open conformation. Functions as a peptidyl-prolyl cis-trans isomerase. This chain is Trigger factor, found in Deinococcus geothermalis (strain DSM 11300 / CIP 105573 / AG-3a).